The sequence spans 371 residues: Cytochrome b (371 aa).

The next 4 helical transmembrane spans lie at 25–45 (FGSM…FLAV), 69–90 (WMMQ…YIHI), 105–125 (WMSG…GYVL), and 170–190 (FFAL…LHII). Heme b-binding residues include His75 and His89. Heme b-binding residues include His174 and His188. His193 lines the a ubiquinone pocket. 4 helical membrane passes run 218–238 (HKDL…MSFF), 280–300 (LGGA…PFTH), 312–332 (LSQL…WAAT), and 339–358 (FIII…LSFP).

Belongs to the cytochrome b family. The cytochrome bc1 complex contains 3 respiratory subunits (MT-CYB, CYC1 and UQCRFS1), 2 core proteins (UQCRC1 and UQCRC2) and probably 6 low-molecular weight proteins. The cofactor is heme b.

The protein resides in the mitochondrion inner membrane. Component of the ubiquinol-cytochrome c reductase complex (complex III or cytochrome b-c1 complex) that is part of the mitochondrial respiratory chain. The b-c1 complex mediates electron transfer from ubiquinol to cytochrome c. Contributes to the generation of a proton gradient across the mitochondrial membrane that is then used for ATP synthesis. The chain is Cytochrome b (MT-CYB) from Apodora papuana (Papuan olive python).